We begin with the raw amino-acid sequence, 313 residues long: Postacrosomal sheath WW domain-binding protein (313 aa).

Residues 8 to 87 (TESRRGALIP…GLMSDCTIEQ (80 aa)) enclose the GRAM domain. Tandem repeats lie at residues 179-185 (YGPPPPG), 193-199 (YGTPPEG), 207-213 (YGAPPMG), 214-220 (YGAPPVG), 221-227 (YGVPPGG), 228-234 (YGVPPGG), 235-241 (YGVPPGG), 242-248 (YGAPPGG), 249-255 (YGVPPGG), 256-262 (YGAPPGG), 263-269 (YGAPPAG), and 270-276 (YGAPPAG). Positions 179–276 (YGPPPPGYTV…PAGYGAPPAG (98 aa)) are 12 X 7 AA tandem repeat of Y-G-X-P-P-X-G. The PPxY motif 1 motif lies at 183 to 186 (PPGY). A compositionally biased stretch (gly residues) spans 254 to 264 (GGYGAPPGGYG). A disordered region spans residues 254–313 (GGYGAPPGGYGAPPAGYGAPPAGNEALPPAYEAPSAGNTAASHRSMTAQQETSLPTTSSS). Low complexity predominate over residues 265–276 (APPAGYGAPPAG). Positions 281-284 (PPAY) match the PPxY motif 2 motif. A compositionally biased stretch (polar residues) spans 289–313 (AGNTAASHRSMTAQQETSLPTTSSS).

In terms of tissue distribution, expressed in testis.

Its function is as follows. May play a role in meiotic resumption and pronuclear formation, mediated by a WW domain-signaling pathway during fertilization. This is Postacrosomal sheath WW domain-binding protein (WBP2NL) from Bos taurus (Bovine).